The following is a 1173-amino-acid chain: Rac guanine nucleotide exchange factor JJ (1173 aa).

3 disordered regions span residues 1–380, 458–479, and 712–765; these read MSYE…NQTQ, KDQL…LKQM, and DDQN…QQQQ. Low complexity-rich tracts occupy residues 8–23 and 35–45; these read QQQQ…QQQQ and QQQQHPQPQYP. Residues 50–62 are compositionally biased toward polar residues; it reads TAQSNDSQQQHYG. 2 stretches are compositionally biased toward low complexity: residues 72-82 and 98-118; these read TTSTTQQQQQQ and QYDQ…NYDY. The segment covering 119-133 has biased composition (polar residues); that stretch reads SNTSGNRNSGQYDQY. 3 stretches are compositionally biased toward low complexity: residues 134-143, 153-191, and 208-219; these read TTTNTTSANT, SPTP…TSTN, and SQTQQQHSPTSS. The segment covering 220–239 has biased composition (polar residues); it reads YDYSQVTNNTATNYDSYYQQ. Positions 240–258 are enriched in low complexity; it reads PTTPTSTSSSSSTTTTTTT. The segment covering 262–277 has biased composition (basic and acidic residues); sequence SKFEKSQSLKNMDHFI. A compositionally biased stretch (polar residues) spans 280–295; it reads TPSNTPSATINSWDYN. The span at 296-380 shows a compositional bias: low complexity; the sequence is QQQPQPQQPQ…NTDTYSNQTQ (85 aa). A compositionally biased stretch (basic and acidic residues) spans 470–479; the sequence is KKGEEDLKQM. Residues 743-765 are compositionally biased toward low complexity; it reads QQPQPQQEQPPQQQQQQQQQQQQ. The region spanning 793 to 822 is the IQ domain; the sequence is RFGDIIRVQRVSRKWLARKKFKDLVKMKLL. In terms of domain architecture, DH spans 833–1016; it reads NRFKSVNELY…KDINKYINDR (184 aa). The PH domain maps to 1044-1146; the sequence is RYFVRESQCN…WLQDLSVELK (103 aa).

Functionally, GTPase-activating protein. This chain is Rac guanine nucleotide exchange factor JJ (gxcJJ), found in Dictyostelium discoideum (Social amoeba).